Here is a 451-residue protein sequence, read N- to C-terminus: MRIPVDASTSRRFTPPSTALSPGKMSEALPLGAPDGGPALASKLRSGDRSMVEVLADHPGELVRTDSPNFLCSVLPTHWRCNKTLPIAFKVVALGDVPDGTLVTVMAGNDENYSAELRNATAAMKNQVARFNDLRFVGRSGRGKSFTLTITVFTNPPQVATYHRAIKITVDGPREPRRHRQKLDDQTKPGSLSFSERLSELEQLRRTAMRVSPHHPAPTPNPRASLNHSTAFNPQPQSQMQDARQIQPSPPWSYDQSYQYLGSITSSSVHPATPISPGRASGMTSLSAELSSRLSTAPDLTAFGDPRQFPTLPSISDPRMHYPGAFTYSPPVTSGIGIGMSAMSSASRYHTYLPPPYPGSSQAQAGPFQTGSPSYHLYYGASAGSYQFSMVGGERSPPRILPPCTNASTGAALLNPSLPSQSDVVETEGSHSNSPTNMPPARLEEAVWRPY.

The segment at 1–37 is disordered; the sequence is MRIPVDASTSRRFTPPSTALSPGKMSEALPLGAPDGG. Residues 7-20 are compositionally biased toward polar residues; the sequence is ASTSRRFTPPSTAL. Thr-14 is subject to Phosphothreonine. Ser-21 carries the phosphoserine modification. N6-acetyllysine is present on residues Lys-24 and Lys-43. In terms of domain architecture, Runt spans 50–178; sequence SMVEVLADHP…TVDGPREPRR (129 aa). Positions 80 to 84 are interaction with DNA; the sequence is RCNKT. Positions 112, 116, 139, and 170 each coordinate chloride. Interaction with DNA stretches follow at residues 135–143 and 168–177; these read RFVGRSGRG and ITVDGPREPR. Disordered stretches follow at residues 170–195 and 209–252; these read VDGPREPRRHRQKLDDQTKPGSLSFS and MRVS…SPPW. Residues Ser-193 and Ser-212 each carry the phosphoserine modification. Residues 222–247 are compositionally biased toward polar residues; the sequence is PRASLNHSTAFNPQPQSQMQDARQIQ. Ser-249 carries the post-translational modification Phosphoserine; by HIPK2. Ser-266 and Ser-268 each carry phosphoserine. The segment at 268–290 is disordered; the sequence is SVHPATPISPGRASGMTSLSAEL. Position 273 is a phosphothreonine; by HIPK2 (Thr-273). Ser-276 is subject to Phosphoserine; by HIPK2. The segment at 291 to 370 is interaction with KAT6A; it reads SSRLSTAPDL…SQAQAGPFQT (80 aa). Thr-296 is subject to Phosphothreonine. Residues 307–399 form an interaction with KAT6B region; it reads RQFPTLPSIS…MVGGERSPPR (93 aa). The segment at 361 to 401 is interaction with FOXP3; it reads SQAQAGPFQTGSPSYHLYYGASAGSYQFSMVGGERSPPRIL. A disordered region spans residues 406-451; it reads NASTGAALLNPSLPSQSDVVETEGSHSNSPTNMPPARLEEAVWRPY. Polar residues predominate over residues 417–436; it reads SLPSQSDVVETEGSHSNSPT. Ser-434 is subject to Phosphoserine. Residues 442–451 are compositionally biased toward basic and acidic residues; the sequence is RLEEAVWRPY.

Heterodimer with CBFB. RUNX1 binds DNA as a monomer and through the Runt domain. DNA-binding is increased by heterodimerization. Interacts with TLE1 and ALYREF/THOC4. Interacts with HIPK2, ELF1, ELF2 and SPI1. Interacts via its Runt domain with the ELF4 N-terminal region. Interaction with ELF2 isoform 2 (NERF-1a) may act to repress RUNX1-mediated transactivation. Interacts with KAT6A and KAT6B. Interacts with SUV39H1, leading to abrogation of transactivating and DNA-binding properties of RUNX1. Interacts with YAP1. Interaction with CDK6 prevents myeloid differentiation, reducing its transcription transactivation activity. Found in a complex with PRMT5, RUNX1 and CBFB. Interacts with FOXP3. Interacts with TBX21. Interacts with DPF2. Phosphorylated in its C-terminus upon IL-6 treatment. Phosphorylation enhances interaction with KAT6A. In terms of processing, methylated. Post-translationally, phosphorylated in Ser-249 Thr-273 and Ser-276 by HIPK2 when associated with CBFB and DNA. This phosphorylation promotes subsequent EP300 phosphorylation. As to expression, isoform 4 is expressed at high levels in thymus, spleen and T-cell lines and at lower levels in myeloid cell lines and nonhematopoietic cells. Isoform 5 is expressed ubiquitously in lumbar vertebrae, brain, kidney, heart, muscle, ovary and osteoblast-like cell line MC3T3-E1.

It localises to the nucleus. In terms of biological role, forms the heterodimeric complex core-binding factor (CBF) with CBFB. RUNX members modulate the transcription of their target genes through recognizing the core consensus binding sequence 5'-TGTGGT-3', or very rarely, 5'-TGCGGT-3', within their regulatory regions via their runt domain, while CBFB is a non-DNA-binding regulatory subunit that allosterically enhances the sequence-specific DNA-binding capacity of RUNX. The heterodimers bind to the core site of a number of enhancers and promoters, including murine leukemia virus, polyomavirus enhancer, T-cell receptor enhancers, LCK, IL3 and GM-CSF promoters. Essential for the development of normal hematopoiesis. Acts synergistically with ELF4 to transactivate the IL-3 promoter and with ELF2 to transactivate the BLK promoter. Inhibits KAT6B-dependent transcriptional activation. Involved in lineage commitment of immature T cell precursors. CBF complexes repress ZBTB7B transcription factor during cytotoxic (CD8+) T cell development. They bind to RUNX-binding sequence within the ZBTB7B locus acting as transcriptional silencer and allowing for cytotoxic T cell differentiation. CBF complexes binding to the transcriptional silencer is essential for recruitment of nuclear protein complexes that catalyze epigenetic modifications to establish epigenetic ZBTB7B silencing. Controls the anergy and suppressive function of regulatory T-cells (Treg) by associating with FOXP3. Activates the expression of IL2 and IFNG and down-regulates the expression of TNFRSF18, IL2RA and CTLA4, in conventional T-cells. Positively regulates the expression of RORC in T-helper 17 cells. Functionally, isoform 4 shows higher binding activities for target genes and binds TCR-beta-E2 and RAG-1 target site with threefold higher affinity than other isoforms. It is less effective in the context of neutrophil terminal differentiation. In Mus musculus (Mouse), this protein is Runt-related transcription factor 1 (Runx1).